The sequence spans 675 residues: Potassium-transporting ATPase ATP-binding subunit 2 (675 aa).

4 helical membrane-spanning segments follow: residues 34–54, 65–85, 216–236, and 245–265; these read IMFV…FPDI, LITI…SEAF, IALF…IVTL, and LILP…TTIG. Asp-304 (4-aspartylphosphate intermediate) is an active-site residue. ATP is bound by residues Asp-341, Glu-345, 372–379, and Lys-390; that span reads FTAETRMS. Asp-513 and Asp-517 together coordinate Mg(2+). Helical transmembrane passes span 569-591, 611-631, and 644-664; these read ALTT…ALMM, AIIS…PIAM, and IFIN…FLGI.

It belongs to the cation transport ATPase (P-type) (TC 3.A.3) family. Type IA subfamily. The system is composed of three essential subunits: KdpA, KdpB and KdpC.

The protein localises to the cell membrane. It carries out the reaction K(+)(out) + ATP + H2O = K(+)(in) + ADP + phosphate + H(+). Its function is as follows. Part of the high-affinity ATP-driven potassium transport (or Kdp) system, which catalyzes the hydrolysis of ATP coupled with the electrogenic transport of potassium into the cytoplasm. This subunit is responsible for energy coupling to the transport system and for the release of the potassium ions to the cytoplasm. The protein is Potassium-transporting ATPase ATP-binding subunit 2 of Staphylococcus aureus (strain Mu50 / ATCC 700699).